The sequence spans 187 residues: KS71A fimbrillin (187 aa).

An N-terminal signal peptide occupies residues 1 to 21 (MIKSVIAGAVAMAVVSFGANA). The cysteines at positions 43 and 82 are disulfide-linked.

This sequence belongs to the fimbrial protein family.

It localises to the fimbrium. Fimbriae (also called pili), polar filaments radiating from the surface of the bacterium to a length of 0.5-1.5 micrometers and numbering 100-300 per cell, enable bacteria to colonize the epithelium of specific host organs. This is KS71A fimbrillin (KS71A) from Escherichia coli.